A 425-amino-acid polypeptide reads, in one-letter code: Dihydroorotase (425 aa).

Positions 61 and 63 each coordinate Zn(2+). Substrate is bound by residues 63–65 (HLR) and Asn95. Positions 153, 180, and 233 each coordinate Zn(2+). Asn279 serves as a coordination point for substrate. Asp306 provides a ligand contact to Zn(2+). Asp306 is an active-site residue. His310 is a binding site for substrate.

This sequence belongs to the metallo-dependent hydrolases superfamily. DHOase family. Class I DHOase subfamily. Zn(2+) serves as cofactor.

It catalyses the reaction (S)-dihydroorotate + H2O = N-carbamoyl-L-aspartate + H(+). Its pathway is pyrimidine metabolism; UMP biosynthesis via de novo pathway; (S)-dihydroorotate from bicarbonate: step 3/3. Its function is as follows. Catalyzes the reversible cyclization of carbamoyl aspartate to dihydroorotate. The sequence is that of Dihydroorotase from Geotalea daltonii (strain DSM 22248 / JCM 15807 / FRC-32) (Geobacter daltonii).